Here is a 263-residue protein sequence, read N- to C-terminus: uncharacterized protein (263 aa).

The disordered stretch occupies residues 22 to 44 (IDGSDDQSDRTRSSSGDSTSNSL). Residues 34–43 (SSSGDSTSNS) are compositionally biased toward low complexity.

It localises to the mitochondrion. This is an uncharacterized protein from Schizosaccharomyces pombe (strain 972 / ATCC 24843) (Fission yeast).